The chain runs to 210 residues: Ribosomal RNA large subunit methyltransferase E (210 aa).

Residues Gly61, Trp63, Asp81, Asp97, and Asp122 each contribute to the S-adenosyl-L-methionine site. Lys162 serves as the catalytic Proton acceptor.

Belongs to the class I-like SAM-binding methyltransferase superfamily. RNA methyltransferase RlmE family.

It is found in the cytoplasm. It carries out the reaction uridine(2552) in 23S rRNA + S-adenosyl-L-methionine = 2'-O-methyluridine(2552) in 23S rRNA + S-adenosyl-L-homocysteine + H(+). Specifically methylates the uridine in position 2552 of 23S rRNA at the 2'-O position of the ribose in the fully assembled 50S ribosomal subunit. The chain is Ribosomal RNA large subunit methyltransferase E from Xanthomonas axonopodis pv. citri (strain 306).